The following is a 313-amino-acid chain: Biotin synthase (313 aa).

The Radical SAM core domain occupies 38–262 (REVQISTLLS…TMPHARVRLS (225 aa)). Residues C53, C57, and C60 each coordinate [4Fe-4S] cluster. 4 residues coordinate [2Fe-2S] cluster: C97, C128, C188, and R260.

It belongs to the radical SAM superfamily. Biotin synthase family. As to quaternary structure, homodimer. [4Fe-4S] cluster serves as cofactor. The cofactor is [2Fe-2S] cluster.

It catalyses the reaction (4R,5S)-dethiobiotin + (sulfur carrier)-SH + 2 reduced [2Fe-2S]-[ferredoxin] + 2 S-adenosyl-L-methionine = (sulfur carrier)-H + biotin + 2 5'-deoxyadenosine + 2 L-methionine + 2 oxidized [2Fe-2S]-[ferredoxin]. It participates in cofactor biosynthesis; biotin biosynthesis; biotin from 7,8-diaminononanoate: step 2/2. Catalyzes the conversion of dethiobiotin (DTB) to biotin by the insertion of a sulfur atom into dethiobiotin via a radical-based mechanism. In Granulibacter bethesdensis (strain ATCC BAA-1260 / CGDNIH1), this protein is Biotin synthase.